A 440-amino-acid polypeptide reads, in one-letter code: L-seryl-tRNA(Sec) selenium transferase (440 aa).

N6-(pyridoxal phosphate)lysine is present on lysine 282.

Belongs to the SelA family. The cofactor is pyridoxal 5'-phosphate.

It is found in the cytoplasm. The catalysed reaction is L-seryl-tRNA(Sec) + selenophosphate + H(+) = L-selenocysteinyl-tRNA(Sec) + phosphate. It participates in aminoacyl-tRNA biosynthesis; selenocysteinyl-tRNA(Sec) biosynthesis; selenocysteinyl-tRNA(Sec) from L-seryl-tRNA(Sec) (bacterial route): step 1/1. Its function is as follows. Converts seryl-tRNA(Sec) to selenocysteinyl-tRNA(Sec) required for selenoprotein biosynthesis. This is L-seryl-tRNA(Sec) selenium transferase from Campylobacter jejuni subsp. jejuni serotype O:2 (strain ATCC 700819 / NCTC 11168).